Reading from the N-terminus, the 930-residue chain is Protein translocase subunit SecA (930 aa).

ATP-binding positions include Gln-87, 105-109, and Asp-515; that span reads GEGKT. Zn(2+) is bound by residues Cys-914, Cys-916, Cys-925, and His-926.

It belongs to the SecA family. In terms of assembly, monomer and homodimer. Part of the essential Sec protein translocation apparatus which comprises SecA, SecYEG and auxiliary proteins SecDF-YajC and YidC. Zn(2+) serves as cofactor.

The protein resides in the cell inner membrane. It localises to the cytoplasm. The enzyme catalyses ATP + H2O + cellular proteinSide 1 = ADP + phosphate + cellular proteinSide 2.. Part of the Sec protein translocase complex. Interacts with the SecYEG preprotein conducting channel. Has a central role in coupling the hydrolysis of ATP to the transfer of proteins into and across the cell membrane, serving both as a receptor for the preprotein-SecB complex and as an ATP-driven molecular motor driving the stepwise translocation of polypeptide chains across the membrane. This Cupriavidus metallidurans (strain ATCC 43123 / DSM 2839 / NBRC 102507 / CH34) (Ralstonia metallidurans) protein is Protein translocase subunit SecA.